The primary structure comprises 771 residues: Assimilatory nitrate reductase electron transfer subunit (771 aa).

43–79 serves as a coordination point for FAD; sequence YNRILLSSVLQGEASLDDITLNSKDWYDKHGITLYTG. Residues cysteine 414, cysteine 416, cysteine 449, and cysteine 452 each coordinate [2Fe-2S] cluster.

Requires FAD as cofactor. [2Fe-2S] cluster serves as cofactor.

Its function is as follows. Required for nitrate assimilation. The chain is Assimilatory nitrate reductase electron transfer subunit (nasB) from Bacillus subtilis (strain 168).